The following is a 140-amino-acid chain: MSANSFDGSIVSSYLTTRMPPWAGVRQNVMGSSIDGRPVLPANSTTLTYETVSGTPLETAASAAASAAAATARGIVTDFAFLSPLASSAASRSSARDDKLTALLAQLDSLTRELNVVSQQLLDLRQQVSALKASSPPNAV.

Residues 100 to 127 adopt a coiled-coil conformation; that stretch reads LTALLAQLDSLTRELNVVSQQLLDLRQQ. Ser-135 is modified (phosphoserine; by host).

The protein belongs to the adenoviridae hexon-interlacing protein family. As to quaternary structure, homotrimer. Interacts with hexon protein; this interaction tethers the hexons together. Self-interacts with adjacent proteins. Interacts with kinesin light chain KLC1; this interaction leads to capsid disruption at the nuclear pore complex during virus entry into host cell.

The protein localises to the virion. It is found in the host nucleus. Functionally, structural component of the virion that forms triskelion structures consisting of three molecules that stabilize three hexon trimers at the center of each icosahedral facet and fixes the peripentonal hexons. Dispensable for assembly. During virus entry, recruits the anterograde motor kinesin-1 to the capsid docked at the nuclear pore complex thereby subjecting the docked capsid to a pulling force. The resulting tension leads to capsid disruption, dispersion of capsid fragments toward cell periphery and eventually viral DNA entry into the host nucleus. This chain is Hexon-interlacing protein, found in Human adenovirus C serotype 2 (HAdV-2).